A 397-amino-acid chain; its full sequence is MIAFRTLDDAVDLADKRVLVRVDLNVPMESGRVTDATRLKAILPTIRDITGKGGKAVLLAHLGRPKGRDESQSLAPVAKALEGELGRKVAFASDCIGDEAKSAVSRLASGEVIVLENTRFHAGEEKNAPDFIEALASLGDIYVNDAFSTAHRAHASTEGLARKLPAYAGRSMESEIEALTKALEAPQRPVLAVVGGSKVSSKLELLGNLVKKVDILVIGGGMANTFLAALGKKVGKSLCEHDLANTARDILKKAEAAGCEIVLPVDAVVATEFKANAAHRVTSVDDVKDDEMMLDAGPETVGIVKQKLDGAKTVVWNGPFGAFEMTPFDAATVAVARYVGDLTHKGRLLSVAGGGDTVAALNHAGTAERFSYVSTAGGAFLEWLEGKALPGVEALRR.

Residues 23–25 (DLN), arginine 38, 61–64 (HLGR), arginine 119, and arginine 152 each bind substrate. ATP contacts are provided by residues lysine 202, glutamate 324, and 354-357 (GGDT).

Belongs to the phosphoglycerate kinase family. Monomer.

The protein localises to the cytoplasm. It catalyses the reaction (2R)-3-phosphoglycerate + ATP = (2R)-3-phospho-glyceroyl phosphate + ADP. Its pathway is carbohydrate degradation; glycolysis; pyruvate from D-glyceraldehyde 3-phosphate: step 2/5. The polypeptide is Phosphoglycerate kinase (pgk) (Xanthobacter flavus).